The following is a 196-amino-acid chain: Pyridoxal 5'-phosphate synthase subunit PdxT (196 aa).

47 to 49 contacts L-glutamine; it reads GES. Residue C79 is the Nucleophile of the active site. L-glutamine contacts are provided by residues R106 and 134 to 135; that span reads IR. Active-site charge relay system residues include H170 and E172.

It belongs to the glutaminase PdxT/SNO family. As to quaternary structure, in the presence of PdxS, forms a dodecamer of heterodimers. Only shows activity in the heterodimer.

The enzyme catalyses aldehydo-D-ribose 5-phosphate + D-glyceraldehyde 3-phosphate + L-glutamine = pyridoxal 5'-phosphate + L-glutamate + phosphate + 3 H2O + H(+). It carries out the reaction L-glutamine + H2O = L-glutamate + NH4(+). The protein operates within cofactor biosynthesis; pyridoxal 5'-phosphate biosynthesis. Its function is as follows. Catalyzes the hydrolysis of glutamine to glutamate and ammonia as part of the biosynthesis of pyridoxal 5'-phosphate. The resulting ammonia molecule is channeled to the active site of PdxS. The polypeptide is Pyridoxal 5'-phosphate synthase subunit PdxT (Bacillus subtilis (strain 168)).